The primary structure comprises 501 residues: Growth/differentiation factor 5 (501 aa).

A signal peptide spans 1-27 (MRLPKLLTFLLWYLAWLDLEFICTVLG). A propeptide spanning residues 28 to 381 (APDLGQRPQG…YLFSQRRKRR (354 aa)) is cleaved from the precursor. The disordered stretch occupies residues 29–169 (PDLGQRPQGT…EPFRPPPITP (141 aa)). A compositionally biased stretch (pro residues) spans 99–111 (PRPGGPEPKPGHP). Basic and acidic residues predominate over residues 148 to 162 (KAREPGPPREPKEPF). A glycan (N-linked (GlcNAc...) asparagine) is linked at asparagine 189. The disordered stretch occupies residues 246–265 (PSDTAKPAAPGGGRAAQLKL). 3 disulfide bridges follow: cysteine 400/cysteine 466, cysteine 429/cysteine 498, and cysteine 433/cysteine 500.

It belongs to the TGF-beta family. Homodimer; disulfide-linked. Interacts with serine proteases, HTRA1 and HTRA3. Following LPS binding, may form a complex with CXCR4, HSP90AA1 and HSPA8. Interacts with high affinity with NOG; inhibits chondrogenesis. Interacts with high affinity with BMPR1B and lower affinity with BMPR1A; positively regulates chondrocyte differentiation and induces SMAD dependent signaling. Interacts with FBN1 (via N-terminal domain) and FBN2. Interacts with TGFBR3. As to expression, predominantly expressed in long bones during embryonic development. Expressed in monocytes (at protein level).

It is found in the secreted. It localises to the cell membrane. Functionally, growth factor involved in bone and cartilage formation. During cartilage development regulates differentiation of chondrogenic tissue through two pathways. Firstly, positively regulates differentiation of chondrogenic tissue through its binding of high affinity with BMPR1B and of less affinity with BMPR1A, leading to induction of SMAD1-SMAD5-SMAD8 complex phosphorylation and then SMAD protein signaling transduction. Secondly, negatively regulates chondrogenic differentiation through its interaction with NOG. Required to prevent excessive muscle loss upon denervation. This function requires SMAD4 and is mediated by phosphorylated SMAD1/5/8. Binds bacterial lipopolysaccharide (LPS) and mediates LPS-induced inflammatory response, including TNF secretion by monocytes. The sequence is that of Growth/differentiation factor 5 (GDF5) from Homo sapiens (Human).